A 607-amino-acid chain; its full sequence is Elongation factor 4 (607 aa).

The tr-type G domain occupies 11–193 (SKIRNFSIIA…QIVEKVPAPT (183 aa)). GTP is bound by residues 23–28 (DHGKST) and 140–143 (NKID).

Belongs to the TRAFAC class translation factor GTPase superfamily. Classic translation factor GTPase family. LepA subfamily.

The protein resides in the cell membrane. It carries out the reaction GTP + H2O = GDP + phosphate + H(+). Functionally, required for accurate and efficient protein synthesis under certain stress conditions. May act as a fidelity factor of the translation reaction, by catalyzing a one-codon backward translocation of tRNAs on improperly translocated ribosomes. Back-translocation proceeds from a post-translocation (POST) complex to a pre-translocation (PRE) complex, thus giving elongation factor G a second chance to translocate the tRNAs correctly. Binds to ribosomes in a GTP-dependent manner. The sequence is that of Elongation factor 4 from Bacillus anthracis (strain A0248).